Consider the following 327-residue polypeptide: Probable cell division protein WhiA (327 aa).

A DNA-binding region (H-T-H motif) is located at residues 275 to 308; that stretch reads SLEELGRLADPPMTKDAVAGRIRRLLSMADRKAK.

Belongs to the WhiA family.

Its function is as follows. Involved in cell division and chromosome segregation. This chain is Probable cell division protein WhiA, found in Mycobacterium avium (strain 104).